The chain runs to 133 residues: Fluoride-specific ion channel FluC (133 aa).

Helical transmembrane passes span 12–32 (LAMT…ASLI), 41–61 (WGTL…LVWL), 76–96 (IVGV…CLVF), and 104–124 (MIGI…VAGA). Na(+)-binding residues include Gly-81 and Thr-84.

Belongs to the fluoride channel Fluc/FEX (TC 1.A.43) family.

It localises to the cell inner membrane. The enzyme catalyses fluoride(in) = fluoride(out). With respect to regulation, na(+) is not transported, but it plays an essential structural role and its presence is essential for fluoride channel function. Fluoride-specific ion channel. Important for reducing fluoride concentration in the cell, thus reducing its toxicity. This is Fluoride-specific ion channel FluC from Xanthomonas euvesicatoria pv. vesicatoria (strain 85-10) (Xanthomonas campestris pv. vesicatoria).